A 465-amino-acid chain; its full sequence is MSRTVTNALGEPLSYGGSSTAWFSASGSGPLLYGTAGNDSMWADSSVDVTMIGDSGDDIYYLYSGVNRASEAPSAGVDTINTWMSYSLPENFENLTVTGVEGFGFGNSASNIISGGSGSQTINGGAGNDVLTGAGGADTFAFKRGNGSDLISDFGSDDVVRLEGYGFTSFDHILANVAQEGLDLKLSLADGEYLVFANTSADQLHANQFSLALDRSVLTQTFSDDFNTLQLSDGTSGVWDPKYWWAPEKGATLTGNDELQWYVNPTYQPTASANPFSVTDGVLTITAKPASQAIQAETNGYDYTSGMLTTYSSFAQTYGYFEMRADMPDDQGAWPAFWLLPGDGTWPPELDVVEMHGQDPNTVIATVHSNETGSQTSIASAARVTDTSGFHKYGVLWTEEEIVWYFDDAAIARADTPSDMHDPMYMLVNLAIGGMAGPPTDGLMGGAEMKVDYVKAYSLDADWHI.

Hemolysin-type calcium-binding repeat units follow at residues 33–50 (YGTA…VDVT), 105–122 (FGNS…SQTI), and 123–140 (NGGA…ADTF). A GH16 domain is found at 213–462 (LDRSVLTQTF…YVKAYSLDAD (250 aa)). Glutamate 349 (nucleophile) is an active-site residue. Glutamate 354 acts as the Proton donor in catalysis.

It belongs to the glycosyl hydrolase 16 family.

The protein localises to the secreted. It participates in glycan metabolism; exopolysaccharide biosynthesis. In terms of biological role, cleaves high molecular weight succinoglycan to yield LMW succinoglycan. Dynamically regulates the molecular weight distribution of succinoglycan by cleaving nascent succinoglycan only during a limited period after its synthesis, perhaps before it undergoes a time-dependent change in its conformation or aggregation state. This is Endo-1,3-1,4-beta-glycanase EglC (eglC) from Rhizobium meliloti (strain 1021) (Ensifer meliloti).